A 123-amino-acid chain; its full sequence is Small ribosomal subunit protein uS12c (123 aa).

It belongs to the universal ribosomal protein uS12 family. In terms of assembly, part of the 30S ribosomal subunit.

The protein resides in the plastid. The protein localises to the chloroplast. With S4 and S5 plays an important role in translational accuracy. Located at the interface of the 30S and 50S subunits. The protein is Small ribosomal subunit protein uS12c (rps12) of Chara vulgaris (Common stonewort).